The chain runs to 350 residues: RNA 3'-terminal phosphate cyclase (350 aa).

ATP is bound by residues glutamine 107 and 290–294 (FLGDQ). Residue histidine 316 is the Tele-AMP-histidine intermediate of the active site.

It belongs to the RNA 3'-terminal cyclase family. Type 1 subfamily.

The protein resides in the cytoplasm. It catalyses the reaction a 3'-end 3'-phospho-ribonucleotide-RNA + ATP = a 3'-end 2',3'-cyclophospho-ribonucleotide-RNA + AMP + diphosphate. Catalyzes the conversion of 3'-phosphate to a 2',3'-cyclic phosphodiester at the end of RNA. The mechanism of action of the enzyme occurs in 3 steps: (A) adenylation of the enzyme by ATP; (B) transfer of adenylate to an RNA-N3'P to produce RNA-N3'PP5'A; (C) and attack of the adjacent 2'-hydroxyl on the 3'-phosphorus in the diester linkage to produce the cyclic end product. The biological role of this enzyme is unknown but it is likely to function in some aspects of cellular RNA processing. The protein is RNA 3'-terminal phosphate cyclase of Gloeothece citriformis (strain PCC 7424) (Cyanothece sp. (strain PCC 7424)).